The sequence spans 308 residues: Ribosomal RNA small subunit methyltransferase H (308 aa).

S-adenosyl-L-methionine contacts are provided by residues 36–38, Asp55, Phe86, Asp103, and Gln110; that span reads GGH.

It belongs to the methyltransferase superfamily. RsmH family.

Its subcellular location is the cytoplasm. It carries out the reaction cytidine(1402) in 16S rRNA + S-adenosyl-L-methionine = N(4)-methylcytidine(1402) in 16S rRNA + S-adenosyl-L-homocysteine + H(+). Its function is as follows. Specifically methylates the N4 position of cytidine in position 1402 (C1402) of 16S rRNA. The polypeptide is Ribosomal RNA small subunit methyltransferase H (Helicobacter pylori (strain Shi470)).